Consider the following 735-residue polypeptide: MENQNRQNASQCPFHGSITNQSSNRTTNKDWWPNQLNLSILHQHDRKTNPHDEEFDYAAEFQKLDYWALKEDLRKLMTESQDWWPADYGHYGPLFIRMAWHSAGTYRIGDGRGGASTGTQRFAPLNSWPDNANLDKARRLLWPIKKKYGNKISWADLFILAGNVAIESMGGKTIGFGGGRVDVWHPEEDIYWGAEKEWLASERHSDDGELEHPLAASVMGLIYVNPEGPDGKPDPKAAARDIRETFRRMGMNDEETVALIAGGHTFGKAHGAGPATHVGPEPEAAPIEAQGLGWMSSYGKGKGSDTITSGIEGAWTPTPTQWDMSYFDMLFGYDWWLTKSPAGAWQWMAVDPNEKDLAPDAEDPSKKVPTMMMTTDLALRFDPEYEKIARRFHQNPEEFAEAFARAWFKLTHRDMGPKTRYLGPEVPKEDFIWQDPIPEVNYELTEAEIEEIKAKILNSGLTVSELVKTAWASASTFRHSDKRGGANGARIRLAPQNEWEVNEPERLAKVLSIYEDIQRELPKKVSIADLIVLGGSAAVEKAARDAGFDVKVPFSPGRGDATQEQTDVESFAVLEPFADGFRNYQKQEYSVPPEELLVDKAQLLGLTAPEMTVLVGGLRVLGANYRDLPHGVFTDRIGVLTNDFFVNLLDMDYEWVPTDSGIYEIRNRKTGEVRWTATRVDLIFGSNSILRSYAEFYAQDDNQEKFVRDFINAWVKVMNADRFDLVKKARESVTA.

The span at 1 to 26 shows a compositional bias: polar residues; it reads MENQNRQNASQCPFHGSITNQSSNRT. A disordered region spans residues 1 to 29; sequence MENQNRQNASQCPFHGSITNQSSNRTTNK. Residues 100–223 constitute a cross-link (tryptophyl-tyrosyl-methioninium (Trp-Tyr) (with M-249)); that stretch reads WHSAGTYRIG…LAASVMGLIY (124 aa). Catalysis depends on His101, which acts as the Proton acceptor. Residues 223 to 249 constitute a cross-link (tryptophyl-tyrosyl-methioninium (Tyr-Met) (with W-100)); that stretch reads YVNPEGPDGKPDPKAAARDIRETFRRM. Residue His264 coordinates heme b.

It belongs to the peroxidase family. Peroxidase/catalase subfamily. In terms of assembly, homodimer or homotetramer. Heme b serves as cofactor. Formation of the three residue Trp-Tyr-Met cross-link is important for the catalase, but not the peroxidase activity of the enzyme.

The catalysed reaction is H2O2 + AH2 = A + 2 H2O. It catalyses the reaction 2 H2O2 = O2 + 2 H2O. Bifunctional enzyme with both catalase and broad-spectrum peroxidase activity. The chain is Catalase-peroxidase from Geobacillus thermodenitrificans (strain NG80-2).